The primary structure comprises 89 residues: Large ribosomal subunit protein bL27 (89 aa).

Belongs to the bacterial ribosomal protein bL27 family.

The polypeptide is Large ribosomal subunit protein bL27 (Synechococcus sp. (strain JA-3-3Ab) (Cyanobacteria bacterium Yellowstone A-Prime)).